We begin with the raw amino-acid sequence, 5141 residues long: SCO-spondin (5141 aa).

The signal sequence occupies residues 1 to 17 (MLLPALLFGMLWAPANG). The EMI domain maps to 18–102 (HWCEQIETVH…ACCPGWGGIH (85 aa)). N-linked (GlcNAc...) asparagine glycosylation is found at Asn-88, Asn-130, Asn-150, and Asn-167. Residues 193-364 (ATCATWSGFH…RLPGYEPGCL (172 aa)) enclose the VWFD 1 domain. 3 disulfides stabilise this stretch: Cys-195-Cys-325, Cys-217-Cys-363, and Cys-239-Cys-245. Residues 472–527 (CPGGQLYSDCISSCPPSCSAVAQGEEGSCGKECVSGCECPTGLFWDGALCVPAAHC) form the TIL 1 domain. Positions 565–738 (AECAVGGDGH…FQVSGDGRCP (174 aa)) constitute a VWFD 2 domain. Disulfide bonds link Cys-567–Cys-700 and Cys-591–Cys-737. Asn-657 and Asn-822 each carry an N-linked (GlcNAc...) asparagine glycan. The TIL 2 domain occupies 830–883 (CPGGQVYQECAPACGHYCGEPEDCKELGSCVAGCNCPPGLLWDLEGQCVPPSMC). 3 N-linked (GlcNAc...) asparagine glycosylation sites follow: Asn-895, Asn-949, and Asn-991. Residues 1017 to 1187 (GWCQASGAPH…HSWRLNPLCP (171 aa)) enclose the VWFD 3 domain. Intrachain disulfides connect Cys-1019–Cys-1151, Cys-1041–Cys-1186, and Cys-1062–Cys-1069. A TIL 3 domain is found at 1280 to 1336 (CEGGQVYEPCGSTCPPTCHDHHPELRWHCQAITCVEGCFCPEGTLLHGGTCVELTDC). Asn-1357 is a glycosylation site (N-linked (GlcNAc...) asparagine). 4 consecutive LDL-receptor class A domains span residues 1380 to 1417 (GCAE…EGCD), 1420 to 1456 (VCGE…QGCL), 1456 to 1492 (LCPQ…ESCL), and 1496 to 1534 (SCTS…VHCS). 12 cysteine pairs are disulfide-bonded: Cys-1381-Cys-1394, Cys-1388-Cys-1407, Cys-1401-Cys-1416, Cys-1421-Cys-1433, Cys-1428-Cys-1446, Cys-1440-Cys-1455, Cys-1457-Cys-1469, Cys-1464-Cys-1482, Cys-1476-Cys-1491, Cys-1497-Cys-1509, Cys-1504-Cys-1522, and Cys-1516-Cys-1533. The interval 1533-1567 (CSSPSLPTPPAGIGQNPSTSSPDTSPSPVGSASPA) is disordered. Over residues 1549-1567 (PSTSSPDTSPSPVGSASPA) the composition is skewed to low complexity. 2 consecutive LDL-receptor class A domains span residues 1569–1605 (PCSL…LDCG) and 1607–1646 (PCKL…DVCE). Cystine bridges form between Cys-1570/Cys-1582, Cys-1577/Cys-1595, Cys-1589/Cys-1604, Cys-1608/Cys-1621, Cys-1615/Cys-1634, and Cys-1628/Cys-1645. 2 N-linked (GlcNAc...) asparagine glycosylation sites follow: Asn-1655 and Asn-1668. The LDL-receptor class A 7 domain maps to 1660–1700 (PCPEFSCPNGTCIDFLLVCDGSPDCELADETEPSLDEQGCG). Disulfide bonds link Cys-1661–Cys-1671, Cys-1666–Cys-1684, Cys-1678–Cys-1699, Cys-1711–Cys-1747, Cys-1715–Cys-1752, Cys-1726–Cys-1737, Cys-1767–Cys-1964, Cys-1771–Cys-1969, and Cys-1781–Cys-1791. TSP type-1 domains are found at residues 1699 to 1753 (CGTW…EACP) and 1755 to 1970 (DGEW…EPCE). Asn-1725 is a glycosylation site (N-linked (GlcNAc...) asparagine). An N-linked (GlcNAc...) asparagine glycan is attached at Asn-1814. 2 consecutive EGF-like domains span residues 1829-1868 (CPLT…GRCV) and 1869-1895 (RPRQ…CQLC). Residues 1970–2030 (EGCEQWGLTY…GMGESCCHCA (61 aa)) enclose the VWFC 1 domain. Asn-2035 is a glycosylation site (N-linked (GlcNAc...) asparagine). 4 disulfides stabilise this stretch: Cys-2070-Cys-2226, Cys-2236-Cys-2248, Cys-2243-Cys-2261, and Cys-2255-Cys-2270. An F5/8 type C domain is found at 2070–2226 (CYSPLGLAGL…IFLWVELLGC (157 aa)). The interval 2087-2109 (PLEHSTRAAPVEAPTAGPGPRED) is disordered. 2 N-linked (GlcNAc...) asparagine glycosylation sites follow: Asn-2130 and Asn-2148. Residues 2235–2271 (LCPGTRHRCANGDCALKGGPCDGAVDCEDGSDEEGCG) form the LDL-receptor class A 8 domain. The disordered stretch occupies residues 2262–2335 (EDGSDEEGCG…SPSASEGLLP (74 aa)). A compositionally biased stretch (polar residues) spans 2276-2294 (STASRVHSTARTPALSPTQ). The segment covering 2301–2314 (HPREGLADMEHQQP) has biased composition (basic and acidic residues). 2 LDL-receptor class A domains span residues 2391–2427 (RCGP…QHCA) and 2448–2484 (LCSP…DDCV). Intrachain disulfides connect Cys-2392/Cys-2404, Cys-2399/Cys-2417, Cys-2411/Cys-2426, Cys-2449/Cys-2461, Cys-2456/Cys-2474, Cys-2468/Cys-2483, Cys-2486/Cys-2522, Cys-2497/Cys-2501, Cys-2532/Cys-2537, Cys-2552/Cys-2589, Cys-2556/Cys-2594, and Cys-2567/Cys-2579. TSP type-1 domains follow at residues 2485–2538 (DCVL…QACP) and 2540–2595 (AGAW…QLCP). Residues 2618–2660 (PPCPPSCLDPEANRSCSGHCVEGCRCPPGLFLQDSHCLPLSEC) form the TIL 4 domain. Residues Asn-2630 and Asn-2679 are each glycosylated (N-linked (GlcNAc...) asparagine). 3 TSP type-1 domains span residues 2700–2754 (SCGW…TDCG), 2758–2813 (PGWT…SLCP), and 2815–2868 (PSAW…HPCT). 9 cysteine pairs are disulfide-bonded: Cys-2701-Cys-2739, Cys-2712-Cys-2716, Cys-2749-Cys-2753, Cys-2769-Cys-2807, Cys-2773-Cys-2812, Cys-2789-Cys-2797, Cys-2827-Cys-2862, Cys-2831-Cys-2867, and Cys-2842-Cys-2852. N-linked (GlcNAc...) asparagine glycans are attached at residues Asn-2921 and Asn-2951. 2 TSP type-1 domains span residues 2969 to 3024 (ACGW…RPCQ) and 3025 to 3068 (GPGA…QPCA). Intrachain disulfides connect Cys-2970/Cys-3008, Cys-2981/Cys-2985, and Cys-3018/Cys-3023. 4 N-linked (GlcNAc...) asparagine glycosylation sites follow: Asn-3046, Asn-3101, Asn-3148, and Asn-3158. Positions 3075 to 3127 (CPKDQQWLDCAQGPASCAHLSTPREANQTCHPGCYCLSGMLLLNNVCVPAQDC) constitute a TIL 5 domain. 2 consecutive TSP type-1 domains span residues 3168 to 3235 (QPAW…PGCN) and 3237 to 3292 (AGVW…QPCP). Disulfide bonds link Cys-3180–Cys-3229, Cys-3184–Cys-3234, Cys-3195–Cys-3219, Cys-3249–Cys-3286, Cys-3253–Cys-3291, and Cys-3264–Cys-3276. Asn-3295 carries N-linked (GlcNAc...) asparagine glycosylation. Positions 3300–3350 (EGAEYSPCGPPCPRSCDDLVHCMWHCQPGCYCPPGKVLSADGAICVQPHHC) constitute a TIL 6 domain. A glycan (N-linked (GlcNAc...) asparagine) is linked at Asn-3384. TSP type-1 domains follow at residues 3393-3455 (SGDW…TACP) and 3457-3512 (DGAW…TPCT). Cystine bridges form between Cys-3405/Cys-3448, Cys-3409/Cys-3454, Cys-3420/Cys-3432, Cys-3469/Cys-3504, Cys-3472/Cys-3511, and Cys-3482/Cys-3494. Asn-3506 is a glycosylation site (N-linked (GlcNAc...) asparagine). A TIL 7 domain is found at 3514-3570 (CGGGQDLLPCGQPCPHSCQDLSLGSTCQPGSSGCQSGCGCPPGQLSQDGLCVFPADC). N-linked (GlcNAc...) asparagine glycosylation is found at Asn-3584 and Asn-3611. Positions 3630–3678 (PGIWSSWGPWEKCSVPCGGGEQLRSRQCARPPCPGLAQQSRTCHIHVCR) constitute a TSP type-1 14 domain. 3 cysteine pairs are disulfide-bonded: Cys-3642–Cys-3672, Cys-3646–Cys-3677, and Cys-3657–Cys-3662. N-linked (GlcNAc...) asparagine glycosylation occurs at Asn-3787. TSP type-1 domains lie at 3806 to 3862 (RGYF…PECP), 3876 to 3928 (AGGW…PSCT), 3942 to 3998 (NCFW…RACP), and 4000 to 4055 (PGGW…MPCE). 3 cysteine pairs are disulfide-bonded: Cys-3818–Cys-3856, Cys-3822–Cys-3861, and Cys-3834–Cys-3846. A glycan (N-linked (GlcNAc...) asparagine) is linked at Asn-3910. 6 disulfides stabilise this stretch: Cys-3943–Cys-3979, Cys-3954–Cys-3958, Cys-3992–Cys-3997, Cys-4012–Cys-4049, Cys-4016–Cys-4054, and Cys-4027–Cys-4039. Positions 4058-4113 (CPAGMEMVSCANRCPYSCSDLQEAVMCQEDQACQLGCRCSEGFLEQDGGCVPVGHC) constitute a TIL 8 domain. An N-linked (GlcNAc...) asparagine glycan is attached at Asn-4135. TSP type-1 domains lie at 4155-4208 (HCAW…DPCP), 4249-4304 (PGGW…QLCL), 4306-4362 (LLEI…GPCQ), and 4364-4418 (DCMW…GNCS). Disulfide bonds link Cys-4156–Cys-4192, Cys-4167–Cys-4171, Cys-4202–Cys-4207, Cys-4261–Cys-4298, Cys-4265–Cys-4303, and Cys-4276–Cys-4288. N-linked (GlcNAc...) asparagine glycosylation occurs at Asn-4345. 3 cysteine pairs are disulfide-bonded: Cys-4365–Cys-4402, Cys-4376–Cys-4378, and Cys-4412–Cys-4417. Asn-4416 carries N-linked (GlcNAc...) asparagine glycosylation. In terms of domain architecture, TIL 9 spans 4422-4477 (CLPPFEFQSCGSPCAGLCATHLSHQLCQDLPPCQPGCYCPMGLLEQDGGCILPEQC). Asn-4557 carries an N-linked (GlcNAc...) asparagine glycan. The TSP type-1 23 domain maps to 4608 to 4659 (TCQWGPWGPWSPCQVPCSGGFKLRWREASDNSVGECRGPWAQTESCNMGSCP). 3 disulfide bridges follow: Cys-4609–Cys-4643, Cys-4620–Cys-4624, and Cys-4653–Cys-4658. The TIL 10 domain occupies 4673 to 4719 (DCANQCPRSCADLWEGVQCLQGPCSPGCRCPPGQLVQDGHCVPISSC). N-linked (GlcNAc...) asparagine glycans are attached at residues Asn-4727, Asn-4744, and Asn-4749. A TSP type-1 24 domain is found at 4759–4812 (CPVLGPWSPWSECSAVCGGGTMVRYRSCEEHPDSAPCQALDMEQRVECNLQTCP). Intrachain disulfides connect Cys-4771–Cys-4806, Cys-4775–Cys-4811, and Cys-4786–Cys-4795. One can recognise a TIL 11 domain in the interval 4814–4868 (CPPGQVLSTCATLCPSFCSHLWPGTICVREPCQLGCGCPGGQLLHSGTCIPPEAC). Residues Asn-4899, Asn-4942, and Asn-4949 are each glycosylated (N-linked (GlcNAc...) asparagine). Residues 4920 to 4978 (CPPGEILQLGELRPCEKTCLEMNKTQAWSNCTEAQVPGCVCQLGHFRSHTGLCVPEDHC) enclose the TIL 12 domain. A VWFC 2 domain is found at 4978 to 5036 (CECWHHGSPHLPGSEWQEACESCRCLHGKSVCTQHCPELSCAQGEVVVQEPGSCCPICQ). 4 disulfides stabilise this stretch: Cys-5047–Cys-5095, Cys-5061–Cys-5112, Cys-5071–Cys-5128, and Cys-5075–Cys-5130. The CTCK domain occupies 5047–5134 (CRHLTELRNL…IHNCHCSACQ (88 aa)). Residue Asn-5055 is glycosylated (N-linked (GlcNAc...) asparagine).

Belongs to the thrombospondin family.

The protein localises to the secreted. It is found in the extracellular space. In terms of biological role, involved in the modulation of neuronal aggregation. May be involved in developmental events during the formation of the central nervous system. This chain is SCO-spondin, found in Rattus norvegicus (Rat).